A 170-amino-acid chain; its full sequence is 4-hydroxyphenylacetate 3-monooxygenase reductase component (170 aa).

The protein belongs to the non-flavoprotein flavin reductase family. HpaC subfamily. As to quaternary structure, homodimer. 4-HPA 3-monooxygenase consists of a reductase component HpaC and an oxygenase component HpaB.

The catalysed reaction is a reduced flavin + NAD(+) = an oxidized flavin + NADH + 2 H(+). It participates in aromatic compound metabolism; 4-hydroxyphenylacetate degradation; pyruvate and succinate semialdehyde from 4-hydroxyphenylacetate: step 1/7. In terms of biological role, catalyzes the reduction of free flavins (FMN, FAD and riboflavin) by NADH. Subsequently, the reduced flavins diffuse to the large HpaB component or to other electron acceptors such as cytochrome c and Fe(3+) ion. The protein is 4-hydroxyphenylacetate 3-monooxygenase reductase component (hpaC) of Salmonella typhimurium (strain LT2 / SGSC1412 / ATCC 700720).